The sequence spans 808 residues: Glutamate receptor 1.1 (808 aa).

A signal peptide spans 1-19; sequence MEILFSISILALLFSGVVA. Residues 20 to 541 are Extracellular-facing; sequence APSDDDVFEE…MWTFFDPFEK (522 aa). 3 N-linked (GlcNAc...) asparagine glycosylation sites follow: asparagine 288, asparagine 339, and asparagine 504. A helical transmembrane segment spans residues 542-562; that stretch reads SLWLASGAFFVLTGIVVWLVE. Residues 563 to 570 are Cytoplasmic-facing; that stretch reads RSVNPEFQ. The helical transmembrane segment at 571 to 591 threads the bilayer; it reads GSWGQQLSMMLWFGFSTIVFA. Residues 592 to 602 lie on the Cytoplasmic side of the membrane; the sequence is HREKLQKMSSR. The helical transmembrane segment at 603–623 threads the bilayer; sequence FLVIVWVFVVLILTSSYSANL. The Extracellular portion of the chain corresponds to 624–771; the sequence is TSTKTISRMQ…SKRFTFRELR (148 aa). Residues 772-792 traverse the membrane as a helical segment; the sequence is GLFIIAGAAHVLVLALHLFHT. Residues 793–808 are Cytoplasmic-facing; sequence RQEVSRLCTKLQSFYK.

This sequence belongs to the glutamate-gated ion channel (TC 1.A.10.1) family. As to quaternary structure, may form heteromers. As to expression, expressed predominantly in roots. First detected in the root-shoot junction, and later in lateral roots and at the margin of matures leaves.

It is found in the membrane. Its function is as follows. Glutamate-gated receptor that probably acts as a non-selective cation channel. Can transport sodium, potassium, and calcium ions. Functions as a carbon and nitrogen regulator and/or sensor that regulates carbon and nitrogen metabolism and distinct physiological process such as germination through the control of acid abscisic (ABA) biosynthesis. May be involved in light-signal transduction and calcium homeostasis via the regulation of calcium influx into cells. Seems required for the regulation of the abscisic acid (ABA) signaling pathway that modulates many aspects of plant physiology such as seed germination and response to drought (e.g. stomata opening). The chain is Glutamate receptor 1.1 (GLR1.1) from Arabidopsis thaliana (Mouse-ear cress).